The primary structure comprises 349 residues: Alanine racemase (349 aa).

Lysine 35 serves as the catalytic Proton acceptor; specific for D-alanine. Lysine 35 bears the N6-(pyridoxal phosphate)lysine mark. Position 130 (arginine 130) interacts with substrate. Tyrosine 244 (proton acceptor; specific for L-alanine) is an active-site residue. Methionine 292 contacts substrate.

Belongs to the alanine racemase family. The cofactor is pyridoxal 5'-phosphate.

It catalyses the reaction L-alanine = D-alanine. Its pathway is amino-acid biosynthesis; D-alanine biosynthesis; D-alanine from L-alanine: step 1/1. Catalyzes the interconversion of L-alanine and D-alanine. May also act on other amino acids. The protein is Alanine racemase (alr) of Cereibacter sphaeroides (strain ATCC 17023 / DSM 158 / JCM 6121 / CCUG 31486 / LMG 2827 / NBRC 12203 / NCIMB 8253 / ATH 2.4.1.) (Rhodobacter sphaeroides).